Reading from the N-terminus, the 105-residue chain is Large ribosomal subunit protein bL21 (105 aa).

It belongs to the bacterial ribosomal protein bL21 family. Part of the 50S ribosomal subunit. Contacts protein L20.

In terms of biological role, this protein binds to 23S rRNA in the presence of protein L20. In Dictyoglomus thermophilum (strain ATCC 35947 / DSM 3960 / H-6-12), this protein is Large ribosomal subunit protein bL21.